Consider the following 134-residue polypeptide: Replication enhancer protein (134 aa).

This sequence belongs to the geminiviridae replication enhancer protein family. In terms of assembly, homooligomer. Interacts with the replication-associated protein (REP). Interacts with host proliferating cell nuclear antigen (PCNA). Interacts with host retinoblastoma-related protein 1 (RBR1), and may thereby deregulate the host cell cycle. Oligomerization and interaction with PCNA are necessary for optimal replication enhancement.

Increases viral DNA accumulation. Enhances infectivity and symptom expression. The sequence is that of Replication enhancer protein from Manihot esculenta (Cassava).